The following is a 90-amino-acid chain: DNA-directed RNA polymerase subunit omega (90 aa).

The segment at 69-90 (RQEQQEQDAAELAAVSSITHNR) is disordered.

Belongs to the RNA polymerase subunit omega family. As to quaternary structure, the RNAP catalytic core consists of 2 alpha, 1 beta, 1 beta' and 1 omega subunit. When a sigma factor is associated with the core the holoenzyme is formed, which can initiate transcription.

It catalyses the reaction RNA(n) + a ribonucleoside 5'-triphosphate = RNA(n+1) + diphosphate. Promotes RNA polymerase assembly. Latches the N- and C-terminal regions of the beta' subunit thereby facilitating its interaction with the beta and alpha subunits. The protein is DNA-directed RNA polymerase subunit omega of Aliivibrio fischeri (strain ATCC 700601 / ES114) (Vibrio fischeri).